An 803-amino-acid polypeptide reads, in one-letter code: 3',5'-cyclic-AMP phosphodiesterase 4D (803 aa).

Residues 1 to 103 (MEAEGSSVPA…SGASRVRHRG (103 aa)) are disordered. A phosphoserine mark is found at histidine 52 and histidine 56. Positions 58–85 (PPPPPPSPQPQLQPPPPPPLPPPPPPPG) are enriched in pro residues. Residues serine 137, serine 294, serine 296, serine 343, and serine 370 each carry the phosphoserine modification. The tract at residues 338-358 (EVEIPSPTQKEKEKKKRPMSQ) is disordered. The PDEase domain occupies 381 to 710 (VKTEQEDVLA…EWYQSTIPQS (330 aa)). Residue lysine 382 forms a Glycyl lysine isopeptide (Lys-Gly) (interchain with G-Cter in SUMO) linkage. Residue histidine 457 is the Proton donor of the active site. Residue histidine 457 coordinates 3',5'-cyclic AMP. AMP is bound at residue histidine 457. Residues histidine 461, histidine 497, aspartate 498, and aspartate 615 each coordinate Zn(2+). Aspartate 498, aspartate 615, asparagine 618, glutamine 666, and phenylalanine 669 together coordinate AMP. Residue aspartate 498 coordinates Mg(2+). Aspartate 498 provides a ligand contact to Mn(2+). 2 residues coordinate 3',5'-cyclic AMP: glutamine 666 and phenylalanine 669. Disordered stretches follow at residues 705-724 (STIP…GRQG) and 732-803 (ELTL…CPDT). Polar residues predominate over residues 757–768 (CSDSKTLCTQDS). Acidic residues predominate over residues 774-789 (PLDEQVEEEAVAEEES).

It belongs to the cyclic nucleotide phosphodiesterase family. PDE4 subfamily. In terms of assembly, homodimer for the long isoforms. Isoforms with truncated N-termini are monomeric. Binds ARRB2. Isoform 33 is part of a ternary complex containing PRKAR2A, PRKAR2B and AKAP9. Identified in a complex composed of RYR1, PDE4D, PKA, FKBP1A and protein phosphatase 1 (PP1). Interacts with PDE4DIP. Isoform 5 interacts (via N-terminal region) with SHANK2 (via proline-rich region); the interaction is increased in a PKA-dependent manner. Isoform 33, isoform 4, isoform 7, isoform 8 and isoform 9 but not isoform 32 and isoform 6 interact with SHANK2. Isoform 31 interacts weakly with SHANK2. Requires Zn(2+) as cofactor. The cofactor is Mg(2+). Mn(2+) serves as cofactor. Isoform 1 and isoform 9 are rapidly activated by PKA through phosphorylation. Long isoforms that share a conserved PKA phosphorylation site in the N-terminus are also activated. Post-translationally, sumoylation of long isoforms by PIAS4 augments their activation by PKA phosphorylation and represses their inhibition by ERK phosphorylation. In terms of tissue distribution, expressed in epithelial cells. Isoform 33, isoform 4, isoform 5 and isoform 9 are expressed in brain. Isoform 33, isoform 5, isoform 8 and isoform 9 are expressed in heart (at protein level). Isoform 4 and isoform 6 are strongly expressed in cortex and cerebellum. Isoform 7 is strongly expressed in cortex and testis; weakly expressed in kidney, lung, spleen and cerebellum. Isoform 8 is strongly expressed in lung, heart and liver. Isoform 31, isoform 32, isoform 33, isoform 5 and isoform 9 are widely distributed.

The protein localises to the apical cell membrane. It localises to the cytoplasm. The protein resides in the membrane. Its subcellular location is the cytoskeleton. It is found in the microtubule organizing center. The protein localises to the centrosome. It catalyses the reaction 3',5'-cyclic AMP + H2O = AMP + H(+). It functions in the pathway purine metabolism; 3',5'-cyclic AMP degradation; AMP from 3',5'-cyclic AMP: step 1/1. With respect to regulation, activated by phosphatidic acid. Inhibited by rolipram. Functionally, hydrolyzes the second messenger cAMP, which is a key regulator of many important physiological processes. The sequence is that of 3',5'-cyclic-AMP phosphodiesterase 4D (Pde4d) from Rattus norvegicus (Rat).